Reading from the N-terminus, the 205-residue chain is MSDTELTTSDFTEAAEPFRLFAAWLDDATKSEINDANGVALATVDAEGMPDVRMVLLKGFDEGGFVFYTNFESAKGQEILGSMKAAMCFHWKSLRRQVRIRGPVEIVSDAEADAYYATRPRGSRIGAWASKQSRPLESRFALEKAVAEYTARYAIGEIPRPKHWSGFRIVPKTIEFWHDRPFRLHDRVVFSRNAKGDWDKARLYP.

FMN-binding positions include 53–58, 68–69, Lys-75, and Gln-97; these read RMVLLK and YT. Position 58 (Lys-58) interacts with substrate. Substrate-binding residues include Tyr-115, Arg-119, and Ser-123. Residues 132–133 and Trp-177 contribute to the FMN site; that span reads QS. 183-185 is a substrate binding site; the sequence is RLH. Residue Arg-187 participates in FMN binding.

The protein belongs to the pyridoxamine 5'-phosphate oxidase family. In terms of assembly, homodimer. The cofactor is FMN.

The enzyme catalyses pyridoxamine 5'-phosphate + O2 + H2O = pyridoxal 5'-phosphate + H2O2 + NH4(+). The catalysed reaction is pyridoxine 5'-phosphate + O2 = pyridoxal 5'-phosphate + H2O2. It functions in the pathway cofactor metabolism; pyridoxal 5'-phosphate salvage; pyridoxal 5'-phosphate from pyridoxamine 5'-phosphate: step 1/1. The protein operates within cofactor metabolism; pyridoxal 5'-phosphate salvage; pyridoxal 5'-phosphate from pyridoxine 5'-phosphate: step 1/1. Catalyzes the oxidation of either pyridoxine 5'-phosphate (PNP) or pyridoxamine 5'-phosphate (PMP) into pyridoxal 5'-phosphate (PLP). This is Pyridoxine/pyridoxamine 5'-phosphate oxidase from Mesorhizobium japonicum (strain LMG 29417 / CECT 9101 / MAFF 303099) (Mesorhizobium loti (strain MAFF 303099)).